We begin with the raw amino-acid sequence, 297 residues long: Putative 6-phosphogluconate dehydrogenase YqeC (297 aa).

NAD(+) is bound by residues 7-12 (GLGKMG) and N94. Substrate is bound by residues N94 and 120 to 122 (SGG). Residue K170 is the Proton acceptor of the active site. Position 173 to 174 (173 to 174 (HN)) interacts with substrate. E177 acts as the Proton donor in catalysis. Residues Y178 and R268 each contribute to the substrate site.

The protein belongs to the 6-phosphogluconate dehydrogenase family.

Functionally, may act as NAD-dependent 6-P-gluconate dehydrogenase. The chain is Putative 6-phosphogluconate dehydrogenase YqeC (yqeC) from Bacillus subtilis (strain 168).